Reading from the N-terminus, the 545-residue chain is Lysine--tRNA ligase (545 aa).

A 'HIGH' region motif is present at residues 33–41 (VSGLQHIGR). A 'KMSKS' region motif is present at residues 288 to 292 (DMSSS).

Belongs to the class-I aminoacyl-tRNA synthetase family.

The protein resides in the cytoplasm. It carries out the reaction tRNA(Lys) + L-lysine + ATP = L-lysyl-tRNA(Lys) + AMP + diphosphate. In Aeropyrum pernix (strain ATCC 700893 / DSM 11879 / JCM 9820 / NBRC 100138 / K1), this protein is Lysine--tRNA ligase (lysS).